The sequence spans 552 residues: Formate--tetrahydrofolate ligase (552 aa).

Residue 65–72 (TPAGEGKT) participates in ATP binding.

It belongs to the formate--tetrahydrofolate ligase family.

It carries out the reaction (6S)-5,6,7,8-tetrahydrofolate + formate + ATP = (6R)-10-formyltetrahydrofolate + ADP + phosphate. The protein operates within one-carbon metabolism; tetrahydrofolate interconversion. This is Formate--tetrahydrofolate ligase from Fervidobacterium nodosum (strain ATCC 35602 / DSM 5306 / Rt17-B1).